We begin with the raw amino-acid sequence, 431 residues long: Tryptophan synthase beta chain (431 aa).

N6-(pyridoxal phosphate)lysine is present on Lys109.

It belongs to the TrpB family. Tetramer of two alpha and two beta chains. Pyridoxal 5'-phosphate serves as cofactor.

It catalyses the reaction (1S,2R)-1-C-(indol-3-yl)glycerol 3-phosphate + L-serine = D-glyceraldehyde 3-phosphate + L-tryptophan + H2O. It participates in amino-acid biosynthesis; L-tryptophan biosynthesis; L-tryptophan from chorismate: step 5/5. In terms of biological role, the beta subunit is responsible for the synthesis of L-tryptophan from indole and L-serine. This chain is Tryptophan synthase beta chain, found in Deinococcus radiodurans (strain ATCC 13939 / DSM 20539 / JCM 16871 / CCUG 27074 / LMG 4051 / NBRC 15346 / NCIMB 9279 / VKM B-1422 / R1).